The following is a 368-amino-acid chain: Phosphoserine aminotransferase (368 aa).

Arginine 44 contacts L-glutamate. Pyridoxal 5'-phosphate contacts are provided by residues 78–79, tryptophan 104, threonine 157, aspartate 179, and glutamine 202; that span reads AT. Lysine 203 bears the N6-(pyridoxal phosphate)lysine mark. 244-245 contributes to the pyridoxal 5'-phosphate binding site; the sequence is NT.

The protein belongs to the class-V pyridoxal-phosphate-dependent aminotransferase family. SerC subfamily. Homodimer. It depends on pyridoxal 5'-phosphate as a cofactor.

The protein localises to the cytoplasm. It catalyses the reaction O-phospho-L-serine + 2-oxoglutarate = 3-phosphooxypyruvate + L-glutamate. The enzyme catalyses 4-(phosphooxy)-L-threonine + 2-oxoglutarate = (R)-3-hydroxy-2-oxo-4-phosphooxybutanoate + L-glutamate. It functions in the pathway amino-acid biosynthesis; L-serine biosynthesis; L-serine from 3-phospho-D-glycerate: step 2/3. Its pathway is cofactor biosynthesis; pyridoxine 5'-phosphate biosynthesis; pyridoxine 5'-phosphate from D-erythrose 4-phosphate: step 3/5. Catalyzes the reversible conversion of 3-phosphohydroxypyruvate to phosphoserine and of 3-hydroxy-2-oxo-4-phosphonooxybutanoate to phosphohydroxythreonine. The polypeptide is Phosphoserine aminotransferase (Neisseria gonorrhoeae (strain ATCC 700825 / FA 1090)).